The following is a 57-amino-acid chain: Protein YnaL (57 aa).

The tract at residues 7–57 is disordered; it reads LQIPVPEPIPGDPVPVPDPIPRPQPMPDPPPDEEPIKLSHRERRSARIRAC. Positions 11-35 are enriched in pro residues; sequence VPEPIPGDPVPVPDPIPRPQPMPDP. Basic residues predominate over residues 46–57; it reads HRERRSARIRAC.

The protein is Protein YnaL of Escherichia coli (strain K12).